We begin with the raw amino-acid sequence, 1172 residues long: Thrombospondin-2 (1172 aa).

The first 18 residues, 1–18 (MLWALALLALGIGPRASA), serve as a signal peptide directing secretion. One can recognise a Laminin G-like domain in the interval 19-215 (GDHVKDTSFD…LQNVHLVFAD (197 aa)). Residues 19–232 (GDHVKDTSFD…KKGCQHSQGA (214 aa)) are heparin-binding. Residues Asn151, Asn316, and Asn330 are each glycosylated (N-linked (GlcNAc...) asparagine). In terms of domain architecture, VWFC spans 318–375 (SACVQEGRIFAENETWVVDSCTTCTCKKFKTVCHQITCSPATCANPSFVEGECCPSCS). TSP type-1 domains follow at residues 381 to 431 (DEGW…GKCD), 437 to 492 (NGGW…DPCP), and 494 to 549 (DGRW…RSCP). Cystine bridges form between Cys393–Cys425, Cys397–Cys430, Cys408–Cys415, Cys449–Cys486, Cys453–Cys491, Cys464–Cys476, Cys506–Cys543, Cys510–Cys548, Cys521–Cys533, Cys553–Cys564, Cys558–Cys574, Cys577–Cys588, Cys594–Cys610, Cys601–Cys619, Cys622–Cys646, Cys652–Cys665, Cys659–Cys678, Cys680–Cys691, Cys707–Cys715, Cys720–Cys740, Cys756–Cys776, Cys779–Cys799, Cys815–Cys835, Cys838–Cys858, Cys876–Cys896, Cys912–Cys932, and Cys948–Cys1169. Asn457 carries N-linked (GlcNAc...) asparagine glycosylation. Residues 549-589 (PIDGCLSNPCFPGAKCNSFPDGSWSCGSCPVGFLGNGTHCE) form the EGF-like 1 domain. Asn584 carries N-linked (GlcNAc...) asparagine glycosylation. An EGF-like 2 domain is found at 648-692 (PENPCKDKTHSCHKNAECIYLGHFSDPMYKCECQIGYAGDGLICG). TSP type-3 repeat units lie at residues 693–728 (EDSDLDGWPNNNLVCATNATYHCIKDNCPKLPNSGQ), 729–764 (EDFDKDGIGDACDEDDDNDGVSDEKDNCQLLFNPRQ), 765–787 (LDYDKDEVGDRCDNCPYVHNPAQ), 788–823 (IDTDNNGEGDACSVDIDGDDVFNERDNCPYVYNTDQ), 824–846 (RDTDGDGVGDHCDNCPLMHNPDQ), 847–884 (IDQDNDLVGDQCDNNEDIDDDGHQNNQDNCPYISNSNQ), 885–920 (ADHDNDGKGDACDSDDDNDGVPDDRDNCRLVFNPDQ), and 921–956 (EDSDGDGRGDICKDDFDNDNVPDIDDVCPENNAITE). N-linked (GlcNAc...) asparagine glycosylation occurs at Asn710. Residues 727–752 (GQEDFDKDGIGDACDEDDDNDGVSDE) are disordered. Acidic residues predominate over residues 739 to 749 (ACDEDDDNDGV). Residues 846-938 (QIDQDNDLVG…GDICKDDFDN (93 aa)) form a disordered region. The segment covering 847-866 (IDQDNDLVGDQCDNNEDIDD) has biased composition (acidic residues). Polar residues predominate over residues 870-884 (QNNQDNCPYISNSNQ). Basic and acidic residues predominate over residues 885-895 (ADHDNDGKGDA). A compositionally biased stretch (acidic residues) spans 896–905 (CDSDDDNDGV). The span at 925 to 935 (GDGRGDICKDD) shows a compositional bias: basic and acidic residues. The Cell attachment site signature appears at 928–930 (RGD). The region spanning 960–1172 (RNFQMVPLDP…SDLKYECRDA (213 aa)) is the TSP C-terminal domain. N-linked (GlcNAc...) asparagine glycosylation is present at Asn1069.

It belongs to the thrombospondin family. In terms of assembly, homotrimer; disulfide-linked. Can bind to fibrinogen, fibronectin, laminin and type V collagen. Interacts (via the TSP type I repeats) with CD36; the interaction conveys an antiangiogenic effect. Interacts (via the TSP type I repeats) with HRG; the interaction blocks the antiangiogenic effect of THBS2 with CD36. Can bind to fibrinogen, fibronectin, laminin.

Its function is as follows. Adhesive glycoprotein that mediates cell-to-cell and cell-to-matrix interactions. Ligand for CD36 mediating antiangiogenic properties. The protein is Thrombospondin-2 (Thbs2) of Mus musculus (Mouse).